The sequence spans 213 residues: Thiamine-phosphate synthase (213 aa).

4-amino-2-methyl-5-(diphosphooxymethyl)pyrimidine is bound by residues 39-43 (QLREK) and Asn71. Mg(2+)-binding residues include Asp72 and Asp91. Residue Ser110 coordinates 4-amino-2-methyl-5-(diphosphooxymethyl)pyrimidine. Residue 136-138 (TGT) participates in 2-[(2R,5Z)-2-carboxy-4-methylthiazol-5(2H)-ylidene]ethyl phosphate binding. A 4-amino-2-methyl-5-(diphosphooxymethyl)pyrimidine-binding site is contributed by Lys139. 2-[(2R,5Z)-2-carboxy-4-methylthiazol-5(2H)-ylidene]ethyl phosphate contacts are provided by residues Gly166 and 186–187 (VS).

Belongs to the thiamine-phosphate synthase family. Mg(2+) serves as cofactor.

The catalysed reaction is 2-[(2R,5Z)-2-carboxy-4-methylthiazol-5(2H)-ylidene]ethyl phosphate + 4-amino-2-methyl-5-(diphosphooxymethyl)pyrimidine + 2 H(+) = thiamine phosphate + CO2 + diphosphate. It catalyses the reaction 2-(2-carboxy-4-methylthiazol-5-yl)ethyl phosphate + 4-amino-2-methyl-5-(diphosphooxymethyl)pyrimidine + 2 H(+) = thiamine phosphate + CO2 + diphosphate. It carries out the reaction 4-methyl-5-(2-phosphooxyethyl)-thiazole + 4-amino-2-methyl-5-(diphosphooxymethyl)pyrimidine + H(+) = thiamine phosphate + diphosphate. Its pathway is cofactor biosynthesis; thiamine diphosphate biosynthesis; thiamine phosphate from 4-amino-2-methyl-5-diphosphomethylpyrimidine and 4-methyl-5-(2-phosphoethyl)-thiazole: step 1/1. Functionally, condenses 4-methyl-5-(beta-hydroxyethyl)thiazole monophosphate (THZ-P) and 2-methyl-4-amino-5-hydroxymethyl pyrimidine pyrophosphate (HMP-PP) to form thiamine monophosphate (TMP). This is Thiamine-phosphate synthase from Clostridium botulinum (strain Eklund 17B / Type B).